Consider the following 317-residue polypeptide: Cyclin-dependent kinase 1 (317 aa).

The Protein kinase domain maps to 7–292 (YQRQEKVGEG…AKRALIHPYF (286 aa)). ATP is bound by residues 13–21 (VGEGTYGVV) and K37. Position 17 is a phosphothreonine (T17). Y18 is modified (phosphotyrosine; by SWE1). D133 functions as the Proton acceptor in the catalytic mechanism. T166 is modified (phosphothreonine; by CAK). Residues 296-317 (DDRDHNNYNEDNIGIDKHQNMQ) form a disordered region.

The protein belongs to the protein kinase superfamily. CMGC Ser/Thr protein kinase family. CDC2/CDKX subfamily. As to quaternary structure, forms several complexes with cyclins CCN1, CLB2, CLN3, and HGC1. The CDC28-CCN1 complex associates with septin CDC11 upon hyphal induction. Interacts with IQG1, RFA2, and HSP90. Phosphorylated at Tyr-18 by SWE1 in a cell cycle-dependent manner. Yeast-form and hyphal cells display similar dynamics of phosphorylation and dephosphorylation of Tyr-18. Tyr-18 phosphorylation leads to inhibition of CDC28 kinase activity.

The catalysed reaction is L-seryl-[protein] + ATP = O-phospho-L-seryl-[protein] + ADP + H(+). It catalyses the reaction L-threonyl-[protein] + ATP = O-phospho-L-threonyl-[protein] + ADP + H(+). Its activity is regulated as follows. Phosphorylation at Thr-17 or Tyr-18 inactivates the enzyme, while phosphorylation at Thr-166 activates it. In terms of biological role, cyclin-dependent kinase that acts as a master regulator of the mitotic and meiotic cell cycles. May drive the G1-S transition. Plays a role in mitotic exit. Plays a role in the expression of morphology-related transcription factors, and especially hyphae-specific genes. Binds distinct cyclin subunits as cells progress through the division cycle or flamentous growth. The CDC28-CLB2 complex regulates cytokinesis partly by phosphorylating the actomyosin ring component IQG1. The CDC28-CLN3 complex phosphorylates SLA1 which regulates cortical actin patch dynamics. The CDC28-CCN1 complex phosphorylates CDC11 and SEC2 upon induction of filamentous growth. The CDC28-HGC1 complex also phosphorylates SEC2 and maintains CDC11 phosphorylation throughout hyphal growth. Moreover, the CDC28-HGC1 complex phosphorylates and prevents RGA2 from localizing to hyphal tips, leading to localized CDC42 activation for hyphal extension. CDC28-HGC1 phosphorylation of EFG1 represses cell separation genes during hyphal growth. Additional substrates for CDC28 are RFA2 in G1-phase; MOB2, which is required for the maintenance of polarisome components and for inhibition of cell separation in hyphae; and GIN4 to regulate its association to SEP7 and subsequent septin ring assembly. The chain is Cyclin-dependent kinase 1 from Candida albicans (strain SC5314 / ATCC MYA-2876) (Yeast).